A 37-amino-acid chain; its full sequence is Defensin-A (37 aa).

3 disulfide bridges follow: Cys-4-Cys-25, Cys-10-Cys-33, and Cys-14-Cys-35.

The protein resides in the secreted. In terms of biological role, has antibacterial activity against M.luteus and E.coli. This Mytilus edulis (Blue mussel) protein is Defensin-A.